Consider the following 481-residue polypeptide: Cysteine--tRNA ligase (481 aa).

Cys29 provides a ligand contact to Zn(2+). A 'HIGH' region motif is present at residues 31 to 41; that stretch reads VTVYDHCHIGH. Residues Cys209, His234, and Glu238 each contribute to the Zn(2+) site. Positions 266-270 match the 'KMSKS' region motif; that stretch reads KMSKS. Position 269 (Lys269) interacts with ATP.

It belongs to the class-I aminoacyl-tRNA synthetase family. Monomer. Requires Zn(2+) as cofactor.

The protein resides in the cytoplasm. The catalysed reaction is tRNA(Cys) + L-cysteine + ATP = L-cysteinyl-tRNA(Cys) + AMP + diphosphate. The protein is Cysteine--tRNA ligase of Geobacter sulfurreducens (strain ATCC 51573 / DSM 12127 / PCA).